Here is a 449-residue protein sequence, read N- to C-terminus: METPAMFIKRCSRSIFLQVVIGLVIGVICGVGIPDLAVQMKPLGDGFIKLIKMLIALIVFCVVVNGISGAGDLKKVGRIGLKSVIYFEILTTIALVLGLVVAYSLGLGSGANIHLNELPAGDVALYTGRTQEIHGPVAFLMGLIPTSVFSAFAENDILQVLLFSVLFGSALNLVGEQASGVARLINEFSHIVFRIMGMIVRLAPLGVFGAVAFTTARYGVDSLSHLGALVLVFYATCLVFVMAVLGSVLRLSGVRMLPFLRYFREELMIVMGTASSDAVLPQVMRKLEHMGIRSSTVGLVIPTGYSFNLDGFSIYLTLAVVFIAHVTGTPLAMTDLVTILLVSLVTSKGAHGIPGSALVILAATLTAVPAIPVAGLVLVLSVDWFMGIGRALTNLIGNCVATVTIARWENDIDMPRAQAILDGRLEAPAKADGEPLKRSAVAGEGKLHG.

9 helical membrane-spanning segments follow: residues 14-34, 47-67, 83-103, 157-177, 195-215, 226-246, 312-332, 359-379, and 385-405; these read SIFL…VGIP, FIKL…VNGI, SVIY…VVAY, ILQV…VGEQ, IMGM…AFTT, LGAL…AVLG, FSIY…TPLA, VILA…LVLV, and FMGI…TVTI.

This sequence belongs to the dicarboxylate/amino acid:cation symporter (DAACS) (TC 2.A.23) family.

It is found in the cell inner membrane. Its function is as follows. Responsible for the transport of dicarboxylates such as succinate, fumarate, and malate from the periplasm across the membrane. The polypeptide is C4-dicarboxylate transport protein 1 (Pseudomonas aeruginosa (strain UCBPP-PA14)).